Reading from the N-terminus, the 394-residue chain is Elongation factor Tu (394 aa).

The region spanning 10-204 (KPHVNVGTIG…HLDTYIPEPE (195 aa)) is the tr-type G domain. Residues 19–26 (GHVDHGKT) form a G1 region. 19–26 (GHVDHGKT) provides a ligand contact to GTP. Threonine 26 provides a ligand contact to Mg(2+). The tract at residues 60–64 (GITIN) is G2. Residues 81–84 (DCPG) are G3. GTP-binding positions include 81-85 (DCPGH) and 136-139 (NKCD). Residues 136–139 (NKCD) are G4. The G5 stretch occupies residues 174–176 (SAL).

Belongs to the TRAFAC class translation factor GTPase superfamily. Classic translation factor GTPase family. EF-Tu/EF-1A subfamily. Monomer.

The protein resides in the cytoplasm. It carries out the reaction GTP + H2O = GDP + phosphate + H(+). Its function is as follows. GTP hydrolase that promotes the GTP-dependent binding of aminoacyl-tRNA to the A-site of ribosomes during protein biosynthesis. The protein is Elongation factor Tu of Actinobacillus pleuropneumoniae serotype 5b (strain L20).